Here is a 108-residue protein sequence, read N- to C-terminus: uncharacterized protein (108 aa).

This is an uncharacterized protein from Schizosaccharomyces pombe (strain 972 / ATCC 24843) (Fission yeast).